A 323-amino-acid chain; its full sequence is Acetylglutamate kinase (323 aa).

Residues 90-91 (GG), Arg-112, and Asn-218 each bind substrate.

This sequence belongs to the acetylglutamate kinase family. ArgB subfamily.

It localises to the cytoplasm. It carries out the reaction N-acetyl-L-glutamate + ATP = N-acetyl-L-glutamyl 5-phosphate + ADP. It functions in the pathway amino-acid biosynthesis; L-arginine biosynthesis; N(2)-acetyl-L-ornithine from L-glutamate: step 2/4. Catalyzes the ATP-dependent phosphorylation of N-acetyl-L-glutamate. In Ehrlichia canis (strain Jake), this protein is Acetylglutamate kinase.